Here is a 111-residue protein sequence, read N- to C-terminus: Ciprofloxacin tolerance protein (111 aa).

Topologically, residues 1–5 (MVTAN) are periplasmic. The helical transmembrane segment at 6-26 (FAAIAGLSLIAVALVAVFFSP) threads the bilayer. Over 27–30 (YRRW) the chain is Cytoplasmic. Residues 31 to 51 (LGFMLAGMFFWGLLEVVRFGV) form a helical membrane-spanning segment. The Periplasmic portion of the chain corresponds to 52 to 58 (QVTFEMP). Residues 59–79 (VTYSYLTALSLAMVMVTFVLL) form a helical membrane-spanning segment. Topologically, residues 80 to 111 (REDKQAQKALANRQYIEHTPVYEDDQQQCSSR) are cytoplasmic.

It is found in the cell inner membrane. Functionally, may play a role in cellular filamentation, especially in response to ciprofloxacin. Increased expression confers tolerance to the antibiotic ciprofloxacin. The chain is Ciprofloxacin tolerance protein from Acinetobacter baumannii.